A 749-amino-acid chain; its full sequence is MGECPFAHQANVDRKRVPAAGFGTKNSDWWPNAVKLNVLRQHQAKSDPFNAEFDYAAAFNSLDYDALKKDLTHLMTDSQDWWPADYGHYGGFFIRMSWHAAGTYRVQDGRGGGGEGQQRFAPLNSWPDNGNLDKARRLLWPIKQKYGNKISWADLLLLAGNVALESMGFKTFGFAGGRADTWEADQSTYWGGETTWLANDVRYEEGTKNGGDINDLKNRNLDHALAASHMGLIYVNPEGPNGEPDPVAAAHDIRTTFGRMAMNDEETVALIAGGHTFGKTHGAGNPDLVGPEPNGAPIEAQGFGWTSKHGSGKAGDAITSGLEVVWTSKPTEWSNLYLKYLFEFEWEHDKSPAGANQFVAKNADAIIPDPFDPSKKRRPTMLTTDLSLRYDPAYEKISRRFLENHDEFADAFARAWFQLLHRDMGPRARWLGPEVPKEILIWEDPVPTADYALVDDRDLAGLKQAIFATGVEPSKFLATAWASAASYRDSDKRGGANGARIRLAPMKDWEVNNPQQLAEVIKALEGVQQQFNSSNQGGKKISIADLIVLAGNAALEKASGLPVPFTPGRTDATQEQTEVDTFEFLKPVADGFRNYGQSTDRVCAEQILIDRANLLTLTPPELTVLIGGLRALGLNYNGSSHGVLTHRRGQLSNDFFVNLLDMSTEWKAADGGKGEVFDGVDRKSGQKKWSATRADLVFGSQAELRALAENYAQADNADKFKKDFVTAWNKVMNLDRFDVKKSNIARARF.

The segment at residues 98-234 is a cross-link (tryptophyl-tyrosyl-methioninium (Trp-Tyr) (with M-260)); it reads WHAAGTYRVQ…LAASHMGLIY (137 aa). His-99 acts as the Proton acceptor in catalysis. Residues 234 to 260 constitute a cross-link (tryptophyl-tyrosyl-methioninium (Tyr-Met) (with W-98)); the sequence is YVNPEGPNGEPDPVAAAHDIRTTFGRM. His-275 contributes to the heme b binding site.

It belongs to the peroxidase family. Peroxidase/catalase subfamily. In terms of assembly, homodimer or homotetramer. Heme b serves as cofactor. Post-translationally, formation of the three residue Trp-Tyr-Met cross-link is important for the catalase, but not the peroxidase activity of the enzyme.

The protein localises to the cytoplasm. It carries out the reaction H2O2 + AH2 = A + 2 H2O. It catalyses the reaction 2 H2O2 = O2 + 2 H2O. In terms of biological role, bifunctional enzyme with both catalase and broad-spectrum peroxidase activity. The polypeptide is Catalase-peroxidase (Mycosarcoma maydis (Corn smut fungus)).